Reading from the N-terminus, the 425-residue chain is Phosphomethylpyrimidine synthase (425 aa).

Substrate is bound by residues Met94, Tyr123, His162, 184 to 186 (SRG), 225 to 228 (NGMR), and Glu264. Zn(2+) is bound at residue His268. Tyr291 contributes to the substrate binding site. His332 is a Zn(2+) binding site. 3 residues coordinate [4Fe-4S] cluster: Cys407, Cys410, and Cys414.

It belongs to the ThiC family. Requires [4Fe-4S] cluster as cofactor.

It catalyses the reaction 5-amino-1-(5-phospho-beta-D-ribosyl)imidazole + S-adenosyl-L-methionine = 4-amino-2-methyl-5-(phosphooxymethyl)pyrimidine + CO + 5'-deoxyadenosine + formate + L-methionine + 3 H(+). Its pathway is cofactor biosynthesis; thiamine diphosphate biosynthesis. Its function is as follows. Catalyzes the synthesis of the hydroxymethylpyrimidine phosphate (HMP-P) moiety of thiamine from aminoimidazole ribotide (AIR) in a radical S-adenosyl-L-methionine (SAM)-dependent reaction. This is Phosphomethylpyrimidine synthase from Methanoregula boonei (strain DSM 21154 / JCM 14090 / 6A8).